The following is a 122-amino-acid chain: Large ribosomal subunit protein uL18 (122 aa).

A compositionally biased stretch (basic and acidic residues) spans 1 to 11 (MLKKPDRNALR). The disordered stretch occupies residues 1 to 22 (MLKKPDRNALRDKRRRRVRKKI). A compositionally biased stretch (basic residues) spans 12-22 (DKRRRRVRKKI).

This sequence belongs to the universal ribosomal protein uL18 family. In terms of assembly, part of the 50S ribosomal subunit; part of the 5S rRNA/L5/L18/L25 subcomplex. Contacts the 5S and 23S rRNAs.

Functionally, this is one of the proteins that bind and probably mediate the attachment of the 5S RNA into the large ribosomal subunit, where it forms part of the central protuberance. In Pelotomaculum thermopropionicum (strain DSM 13744 / JCM 10971 / SI), this protein is Large ribosomal subunit protein uL18.